We begin with the raw amino-acid sequence, 433 residues long: 3-phosphoshikimate 1-carboxyvinyltransferase (433 aa).

3 residues coordinate 3-phosphoshikimate: Lys-22, Ser-23, and Arg-27. Residue Lys-22 participates in phosphoenolpyruvate binding. Phosphoenolpyruvate contacts are provided by Gly-94 and Arg-122. Ser-168, Ser-169, Gln-170, Ser-196, Asp-319, and Lys-346 together coordinate 3-phosphoshikimate. Gln-170 serves as a coordination point for phosphoenolpyruvate. The active-site Proton acceptor is the Asp-319. The phosphoenolpyruvate site is built by Arg-350, Arg-394, and Lys-418.

Belongs to the EPSP synthase family. In terms of assembly, monomer.

It localises to the cytoplasm. The enzyme catalyses 3-phosphoshikimate + phosphoenolpyruvate = 5-O-(1-carboxyvinyl)-3-phosphoshikimate + phosphate. It participates in metabolic intermediate biosynthesis; chorismate biosynthesis; chorismate from D-erythrose 4-phosphate and phosphoenolpyruvate: step 6/7. In terms of biological role, catalyzes the transfer of the enolpyruvyl moiety of phosphoenolpyruvate (PEP) to the 5-hydroxyl of shikimate-3-phosphate (S3P) to produce enolpyruvyl shikimate-3-phosphate and inorganic phosphate. The polypeptide is 3-phosphoshikimate 1-carboxyvinyltransferase (Nitrosomonas eutropha (strain DSM 101675 / C91 / Nm57)).